The following is a 445-amino-acid chain: ATP-dependent protease ATPase subunit HslU (445 aa).

ATP-binding positions include I17, 59–64, D254, E319, and R391; that span reads GVGKTE.

This sequence belongs to the ClpX chaperone family. HslU subfamily. As to quaternary structure, a double ring-shaped homohexamer of HslV is capped on each side by a ring-shaped HslU homohexamer. The assembly of the HslU/HslV complex is dependent on binding of ATP.

Its subcellular location is the cytoplasm. In terms of biological role, ATPase subunit of a proteasome-like degradation complex; this subunit has chaperone activity. The binding of ATP and its subsequent hydrolysis by HslU are essential for unfolding of protein substrates subsequently hydrolyzed by HslV. HslU recognizes the N-terminal part of its protein substrates and unfolds these before they are guided to HslV for hydrolysis. This chain is ATP-dependent protease ATPase subunit HslU, found in Pseudomonas savastanoi pv. phaseolicola (strain 1448A / Race 6) (Pseudomonas syringae pv. phaseolicola (strain 1448A / Race 6)).